A 442-amino-acid chain; its full sequence is MSSESLTVIVGLGKTGLSCAQFLAAKNQPFAVMDSREEPPEWENFIKTYPRVELIRGQFSEKLLNEAQEIILSPGVSLQEPLIAKQAAQGKSIIGDIELFARNVNKPIIAITGSNGKTTVTTVVGLMMKAAGRNVSVCGNIGEPVLEQITPEPDYYVLELSSFQLETTFSLRSQAATILNISEDHMNRYATLQDYLRAKQRIYTDCFIPIVNADEPEIWRHLPFNKKPLSFGLNNAADFSLAEHNQKTSIAYQGKILMPIQELKLNARHHLQNALAALALGTAAKIPIENMLHVLRDFSGIRHRCQWVRKYKEIDYYNDSKGTNVGATRAAIESLGQAAKGQLILIAGGQGKGADFSPLKDVVKRYVKQVILIGEDAPLLEKTLKEITVIKHADSMNEAVKRSTQAAKAGDIVLLSPACASFDMFTNYEHRGDVFTETVEAL.

ATP is bound at residue 113–119 (GSNGKTT).

Belongs to the MurCDEF family.

The protein localises to the cytoplasm. The catalysed reaction is UDP-N-acetyl-alpha-D-muramoyl-L-alanine + D-glutamate + ATP = UDP-N-acetyl-alpha-D-muramoyl-L-alanyl-D-glutamate + ADP + phosphate + H(+). The protein operates within cell wall biogenesis; peptidoglycan biosynthesis. Its function is as follows. Cell wall formation. Catalyzes the addition of glutamate to the nucleotide precursor UDP-N-acetylmuramoyl-L-alanine (UMA). The chain is UDP-N-acetylmuramoylalanine--D-glutamate ligase from Coxiella burnetii (strain CbuG_Q212) (Coxiella burnetii (strain Q212)).